A 382-amino-acid polypeptide reads, in one-letter code: Succinate--CoA ligase [ADP-forming] subunit beta (382 aa).

The 229-residue stretch at 9–237 (KQVFADAGIP…AAEGDELEQK (229 aa)) folds into the ATP-grasp domain. ATP is bound by residues Lys-45, 52-54 (GRG), Glu-91, Val-94, and Glu-99. Mg(2+)-binding residues include Asn-191 and Asp-205. Substrate-binding positions include Asn-257 and 314–316 (GIT).

The protein belongs to the succinate/malate CoA ligase beta subunit family. As to quaternary structure, heterotetramer of two alpha and two beta subunits. Mg(2+) serves as cofactor.

It catalyses the reaction succinate + ATP + CoA = succinyl-CoA + ADP + phosphate. The catalysed reaction is GTP + succinate + CoA = succinyl-CoA + GDP + phosphate. The protein operates within carbohydrate metabolism; tricarboxylic acid cycle; succinate from succinyl-CoA (ligase route): step 1/1. Succinyl-CoA synthetase functions in the citric acid cycle (TCA), coupling the hydrolysis of succinyl-CoA to the synthesis of either ATP or GTP and thus represents the only step of substrate-level phosphorylation in the TCA. The beta subunit provides nucleotide specificity of the enzyme and binds the substrate succinate, while the binding sites for coenzyme A and phosphate are found in the alpha subunit. This is Succinate--CoA ligase [ADP-forming] subunit beta from Haloarcula marismortui (strain ATCC 43049 / DSM 3752 / JCM 8966 / VKM B-1809) (Halobacterium marismortui).